The chain runs to 371 residues: N-acetyldiaminopimelate deacetylase (371 aa).

The active site involves aspartate 68. The active-site Proton acceptor is glutamate 127.

It belongs to the peptidase M20A family. N-acetyldiaminopimelate deacetylase subfamily.

It carries out the reaction N-acetyl-(2S,6S)-2,6-diaminopimelate + H2O = (2S,6S)-2,6-diaminopimelate + acetate. It participates in amino-acid biosynthesis; L-lysine biosynthesis via DAP pathway; LL-2,6-diaminopimelate from (S)-tetrahydrodipicolinate (acetylase route): step 3/3. Its function is as follows. Catalyzes the conversion of N-acetyl-diaminopimelate to diaminopimelate and acetate. The polypeptide is N-acetyldiaminopimelate deacetylase (Listeria monocytogenes serovar 1/2a (strain ATCC BAA-679 / EGD-e)).